The primary structure comprises 410 residues: Homeobox protein Hox-A3a (410 aa).

The interval 79–126 (VTDTSDNKQPPTAPSGPSSPSSLNQIPNIDSAAKNPVHVSPTPSTRKH) is disordered. An Antp-type hexapeptide motif is present at residues 127–132 (IFPWMK). The segment at residues 163–222 (SKRARTAYTSAQLVELEKEFHFNRYLCRPRRVEMANLLNLTERQIKIWFQNRRMKYKKDQ) is a DNA-binding region (homeobox). Residues 222-249 (QKGLGMMPSPGAQSPHSPVSLSSGGGGG) are disordered.

Belongs to the Antp homeobox family.

It is found in the nucleus. Its function is as follows. Sequence-specific transcription factor which is part of a developmental regulatory system that provides cells with specific positional identities on the anterior-posterior axis. The sequence is that of Homeobox protein Hox-A3a (hoxa3a) from Danio rerio (Zebrafish).